The primary structure comprises 282 residues: HTH-type transcriptional activator RhaR (282 aa).

An HTH araC/xylS-type domain is found at 179–277 (DKLITALANS…GMTPSQWRHL (99 aa)). 2 DNA-binding regions (H-T-H motif) span residues 196 to 217 (DAFC…RAQT) and 244 to 267 (ISEI…TRET).

As to quaternary structure, binds DNA as a dimer.

The protein localises to the cytoplasm. In terms of biological role, activates expression of the rhaSR operon in response to L-rhamnose. This chain is HTH-type transcriptional activator RhaR, found in Salmonella dublin (strain CT_02021853).